Consider the following 256-residue polypeptide: Small ribosomal subunit protein eS1A (256 aa).

An N-acetylalanine; partial modification is found at Ala2.

The protein belongs to the eukaryotic ribosomal protein eS1 family. Component of the small ribosomal subunit. Mature ribosomes consist of a small (40S) and a large (60S) subunit. The 40S subunit contains about 33 different proteins and 1 molecule of RNA (18S). The 60S subunit contains about 49 different proteins and 3 molecules of RNA (25S, 5.8S and 5S).

Its subcellular location is the cytoplasm. In Scheffersomyces stipitis (strain ATCC 58785 / CBS 6054 / NBRC 10063 / NRRL Y-11545) (Yeast), this protein is Small ribosomal subunit protein eS1A.